The primary structure comprises 1370 residues: DNA-directed RNA polymerase subunit beta (1370 aa).

This sequence belongs to the RNA polymerase beta chain family. The RNAP catalytic core consists of 2 alpha, 1 beta, 1 beta' and 1 omega subunit. When a sigma factor is associated with the core the holoenzyme is formed, which can initiate transcription.

The enzyme catalyses RNA(n) + a ribonucleoside 5'-triphosphate = RNA(n+1) + diphosphate. DNA-dependent RNA polymerase catalyzes the transcription of DNA into RNA using the four ribonucleoside triphosphates as substrates. The polypeptide is DNA-directed RNA polymerase subunit beta (Polaromonas naphthalenivorans (strain CJ2)).